A 402-amino-acid polypeptide reads, in one-letter code: Acetylornithine aminotransferase (402 aa).

Pyridoxal 5'-phosphate is bound by residues Gly106–Ala107 and Phe132. Arg135 serves as a coordination point for N(2)-acetyl-L-ornithine. Asp217–Gln220 is a pyridoxal 5'-phosphate binding site. Lys247 carries the post-translational modification N6-(pyridoxal phosphate)lysine. N(2)-acetyl-L-ornithine is bound at residue Thr275. Thr276 is a binding site for pyridoxal 5'-phosphate.

It belongs to the class-III pyridoxal-phosphate-dependent aminotransferase family. ArgD subfamily. In terms of assembly, homodimer. Requires pyridoxal 5'-phosphate as cofactor.

The protein resides in the cytoplasm. The enzyme catalyses N(2)-acetyl-L-ornithine + 2-oxoglutarate = N-acetyl-L-glutamate 5-semialdehyde + L-glutamate. The protein operates within amino-acid biosynthesis; L-arginine biosynthesis; N(2)-acetyl-L-ornithine from L-glutamate: step 4/4. The protein is Acetylornithine aminotransferase of Streptomyces coelicolor (strain ATCC BAA-471 / A3(2) / M145).